The sequence spans 352 residues: C-C chemokine receptor type 5 (352 aa).

Over 1-30 (MDYQVSSPTYDIDYYTSEPCQKINVKQIAA) the chain is Extracellular. Tyrosine 3 is subject to Sulfotyrosine. O-linked (GalNAc...) serine glycans are attached at residues serine 6 and serine 7. Sulfotyrosine is present on residues tyrosine 10, tyrosine 14, and tyrosine 15. 2 disulfides stabilise this stretch: cysteine 20–cysteine 269 and cysteine 101–cysteine 178. A helical membrane pass occupies residues 31 to 58 (RLLPPLYSLVFIFGFVGNILVVLILINC). Residues 59–68 (KRLKSMTDIY) are Cytoplasmic-facing. The helical transmembrane segment at 69–89 (LLNLAISDLLFLLTVPFWAHY) threads the bilayer. Topologically, residues 90 to 102 (AAAQWDFGNTMCQ) are extracellular. The helical transmembrane segment at 103 to 124 (LLTGLYFIGFFSGIFFIILLTI) threads the bilayer. The Cytoplasmic segment spans residues 125 to 141 (DRYLAIVHAVFALKART). A helical membrane pass occupies residues 142 to 166 (VTFGVVTSVITWVVAVFASLPGIIF). Residues 167–198 (TRSQREGLHYTCSSHFPYSQYQFWKNFQTLKI) lie on the Extracellular side of the membrane. Residues 199 to 218 (VILGLVLPLLVMVICYSGIL) form a helical membrane-spanning segment. At 219–235 (KTLLRCRNEKKRHRAVR) the chain is on the cytoplasmic side. The helical transmembrane segment at 236–260 (LIFTIMIVYFLFWAPYNIVLLLNTF) threads the bilayer. Residues 261-277 (QEFFGLNNCSSSNRLDQ) are Extracellular-facing. A helical transmembrane segment spans residues 278–301 (AMQVTETLGMTHCCINPIIYAFVG). At 302 to 352 (EKFRNYLLVFFQKHIAKRFCKCCSIFQQEAPERASSVYTRSTGEQEISVGL) the chain is on the cytoplasmic side. Residues cysteine 321, cysteine 323, and cysteine 324 are each lipidated (S-palmitoyl cysteine). Phosphoserine; by BARK1 occurs at positions 336, 337, 342, and 349.

It belongs to the G-protein coupled receptor 1 family. In terms of assembly, interacts with PRAF2. Efficient ligand binding to CCL3/MIP-1alpha and CCL4/MIP-1beta requires sulfation, O-glycosylation and sialic acid modifications. Glycosylation on Ser-6 is required for efficient binding of CCL4. Interacts with GRK2. Interacts with ARRB1 and ARRB2. Interacts with CNIH4. Interacts with S100A4; this interaction stimulates T-lymphocyte chemotaxis. Sulfated on at least 2 of the N-terminal tyrosines. Sulfation is required for efficient binding of the chemokines, CCL3 and CCL4. Post-translationally, palmitoylation in the C-terminal is important for cell surface expression. In terms of processing, phosphorylation on serine residues in the C-terminal is stimulated by binding CC chemokines especially by APO-RANTES. O-glycosylated, but not N-glycosylated. Ser-6 appears to be the major site even if Ser-7 may be also O-glycosylated. Also sialylated glycans present which contribute to chemokine binding. Thr-16 and Ser-17 may also be glycosylated and, if so, with small moieties such as a T-antigen.

Its subcellular location is the cell membrane. In terms of biological role, receptor for a number of inflammatory CC-chemokines including CCL3/MIP-1-alpha, CCL4/MIP-1-beta and RANTES and subsequently transduces a signal by increasing the intracellular calcium ion level. May play a role in the control of granulocytic lineage proliferation or differentiation. Participates in T-lymphocyte migration to the infection site by acting as a chemotactic receptor. The polypeptide is C-C chemokine receptor type 5 (CCR5) (Papio anubis (Olive baboon)).